Consider the following 434-residue polypeptide: Enolase (434 aa).

A phosphoenolpyruvate-binding site is contributed by A41. Q165 contacts (2R)-2-phosphoglycerate. E207 acts as the Proton donor in catalysis. Residues D244, E291, and D318 each coordinate Mg(2+). Residues K343, R372, S373, and K394 each contribute to the phosphoenolpyruvate site. (2R)-2-phosphoglycerate is bound by residues K343, R372, S373, and K394. Residue K343 is the Proton acceptor of the active site.

Belongs to the enolase family. As to quaternary structure, homodimer and homooctamer; the homodimer is inactive. Requires Mg(2+) as cofactor.

It is found in the cytoplasm. The protein resides in the secreted. Its subcellular location is the cell surface. The catalysed reaction is (2R)-2-phosphoglycerate = phosphoenolpyruvate + H2O. It functions in the pathway carbohydrate degradation; glycolysis; pyruvate from D-glyceraldehyde 3-phosphate: step 4/5. Catalyzes the reversible conversion of 2-phosphoglycerate (2-PG) into phosphoenolpyruvate (PEP). It is essential for the degradation of carbohydrates via glycolysis. In terms of biological role, 'Moonlights' as a laminin receptor. Binds laminin when expressed on the bacterial cell surface; this probably induces destruction of the extracellular matrix, favoring invasion and dissemination. The sequence is that of Enolase from Staphylococcus aureus.